The primary structure comprises 107 residues: YcgL domain-containing protein Psyc_0800 (107 aa).

A YcgL domain is found at 1–95 (MHCDIYKFLK…QDVMRRQAEL (95 aa)).

In Psychrobacter arcticus (strain DSM 17307 / VKM B-2377 / 273-4), this protein is YcgL domain-containing protein Psyc_0800.